Here is a 624-residue protein sequence, read N- to C-terminus: DNA mismatch repair protein MutL (624 aa).

Belongs to the DNA mismatch repair MutL/HexB family.

Its function is as follows. This protein is involved in the repair of mismatches in DNA. It is required for dam-dependent methyl-directed DNA mismatch repair. May act as a 'molecular matchmaker', a protein that promotes the formation of a stable complex between two or more DNA-binding proteins in an ATP-dependent manner without itself being part of a final effector complex. This chain is DNA mismatch repair protein MutL, found in Chlorobium phaeobacteroides (strain DSM 266 / SMG 266 / 2430).